Here is a 109-residue protein sequence, read N- to C-terminus: SRA stem-loop-interacting RNA-binding protein, mitochondrial (109 aa).

Residue Ser15 is modified to Phosphoserine. Residues 19–103 (PVAFVRRIPW…RRPKLPQTSD (85 aa)) enclose the RRM domain. Thr101 bears the Phosphothreonine mark. A Phosphoserine modification is found at Ser102.

The protein resides in the mitochondrion. The protein localises to the nucleus. RNA-binding protein that acts as a nuclear receptor corepressor. Probably acts by binding the SRA RNA, and repressing the SRA-mediated nuclear receptor coactivation. Binds the STR7 loop of SRA RNA. Also able to repress glucocorticoid (GR), androgen (AR), thyroid (TR) and VDR-mediated transactivation. In Pongo abelii (Sumatran orangutan), this protein is SRA stem-loop-interacting RNA-binding protein, mitochondrial (SLIRP).